The chain runs to 351 residues: Short-chain dehydrogenase sdnK (351 aa).

NADP(+) is bound by residues isoleucine 46, threonine 66, glutamate 98, tyrosine 224, lysine 228, and threonine 268. Tyrosine 224 functions as the Proton donor in the catalytic mechanism. Lysine 228 functions as the Lowers pKa of active site Tyr in the catalytic mechanism.

It belongs to the short-chain dehydrogenases/reductases (SDR) family.

Its pathway is antibiotic biosynthesis. Its function is as follows. Short-chain dehydrogenase; part of the gene cluster that mediates the biosynthesis of sordarin and hypoxysordarin, glycoside antibiotics with a unique tetracyclic diterpene aglycone structure. First, the geranylgeranyl diphosphate synthase sdnC constructs GGDP from farnesyl diphosphate and isopentenyl diphosphate. The diterpene cyclase sdnA then catalyzes the cyclization of GGDP to afford cycloaraneosene. Cycloaraneosene is then hydroxylated four times by the putative cytochrome P450 monooxygenases sdnB, sdnE, sdnF and sdnH to give a hydroxylated cycloaraneosene derivative such as cycloaraneosene-8,9,13,19-tetraol. Although the order of the hydroxylations is unclear, at least C8, C9 and C13 of the cycloaraneosene skeleton are hydroxylated before the sordaricin formation. Dehydration of the 13-hydroxy group of the hydroxylated cycloaraneosene derivative might be catalyzed by an unassigned hypothetical protein such as sdnG and sdnP to construct the cyclopentadiene moiety. The FAD-dependent oxidoreductase sdnN is proposed to catalyze the oxidation at C9 of the hydroxylated cycloaraneosene derivative and also catalyze the Baeyer-Villiger oxidation to give the lactone intermediate. The presumed lactone intermediate would be hydrolyzed to give an acrolein moiety and a carboxylate moiety. Then, [4+2]cycloaddition would occur between the acrolein moiety and the cyclopentadiene moiety to give sordaricin. SdnN might also be involved in the [4+2]cycloaddition after the hypothesized oxidation to accommodate the oxidized product and prompt the [4+2]cycloaddition. GDP-6-deoxy-D-altrose may be biosynthesized from GDP-D-mannose by the putative GDP-mannose-4,6-dehydratase sdnI and the short-chain dehydrogenase sdnK. The glycosyltransferase sdnJ catalyzes the attachment of 6-deoxy-D-altrose onto the 19-hydroxy group of sordaricin to give 4'-O-demethylsordarin. The methyltransferase sdnD would complete the biosynthesis of sordarin. Sordarin can be further modified into hypoxysordarin. The unique acyl chain at the 3'-hydroxy group of hypoxysordarin would be constructed by an iterative type I PKS sdnO and the trans-acting polyketide methyltransferase sdnL. SdnL would be responsible for the introduction of an alpha-methyl group of the polyketide chain. Alternatively, the beta-lactamase-like protein sdnR might be responsible for the cleavage and transfer of the polyketide chain from the PKS sdnO to sordarin. Two putative cytochrome P450 monooxygenases, sdnQ and sdnT, might catalyze the epoxidations of the polyketide chain to complete the biosynthesis of hypoxysordarin. Transcriptional regulators sdnM and sdnS are presumably encoded for the transcriptional regulation of the expression of the sdn gene cluster. This Sordaria araneosa (Pleurage araneosa) protein is Short-chain dehydrogenase sdnK.